The primary structure comprises 240 residues: MGDLWLLLLLPLSLAAFHGVKGCLECDPKFIEEVKSLLGKLVPPEVPGRTHMLERQMKEMIRLSFKVSHRDKMLRVLAVQKVVDLRTWLKIELDKLSKEKWKGVFILQGRLLDIRKNLDSKLEKLLKKFSEVACSEDCVVTEGPILDCWTCLRITSRCFRGEYCEEDDPKKAESREIGLFLILLAEGVILGGVLLLFHFCISHQRKMKAIRRSLKTYLEKKLEELMGIKDEKEKDFRGRE.

The signal sequence occupies residues 1 to 22 (MGDLWLLLLLPLSLAAFHGVKG). Over 23–176 (CLECDPKFIE…DDPKKAESRE (154 aa)) the chain is Extracellular. A helical transmembrane segment spans residues 177 to 197 (IGLFLILLAEGVILGGVLLLF). The Cytoplasmic segment spans residues 198-240 (HFCISHQRKMKAIRRSLKTYLEKKLEELMGIKDEKEKDFRGRE).

This sequence belongs to the Izumo family. As to quaternary structure, monomer and homodimer.

The protein resides in the cell membrane. The polypeptide is Izumo sperm-egg fusion protein 3 (IZUMO3) (Bos taurus (Bovine)).